Here is an 822-residue protein sequence, read N- to C-terminus: Fibroblast growth factor receptor 1 (822 aa).

The signal sequence occupies residues 1–21 (MWSWKCLLFWAVLVTATLCTA). Residues 22-376 (RPSPTLPEQA…AVMTSPLYLE (355 aa)) are Extracellular-facing. Residues 25–119 (PTLPEQAQPW…DTTYFSVNVS (95 aa)) form the Ig-like C2-type 1 domain. C55 and C101 are oxidised to a cystine. 2 N-linked (GlcNAc...) asparagine glycosylation sites follow: N77 and N117. A disordered region spans residues 120-154 (DALPSSEDDDDDDDSSSEEKETDNTKPNRMPVAPY). Acidic residues predominate over residues 125-135 (SEDDDDDDDSS). The span at 136–145 (SEEKETDNTK) shows a compositional bias: basic and acidic residues. Ig-like C2-type domains are found at residues 158–246 (PEKM…YQLD) and 255–357 (PILQ…AWLT). Residues 160 to 177 (KMEKKLHAVPAAKTVKFK) form a heparin-binding region. A disulfide bond links C178 and C230. N-linked (GlcNAc...) asparagine glycosylation is found at N227, N240, N264, N296, N317, and N330. A disulfide bridge links C277 with C341. A helical membrane pass occupies residues 377–397 (IIIYCTGAFLISCMVGSVIVY). At 398-822 (KMKSGTKKSD…QLANGGLKRR (425 aa)) the chain is on the cytoplasmic side. Y463 is modified (phosphotyrosine; by autocatalysis). A Protein kinase domain is found at 478 to 767 (LVLGKPLGEG…VALTSNQEYL (290 aa)). Residues 484–490 (LGEGCFG), K514, 562–564 (EYA), and N568 contribute to the ATP site. Y583 and Y585 each carry phosphotyrosine; by autocatalysis. D623 serves as the catalytic Proton acceptor. Residues R627 and D641 each coordinate ATP. Phosphotyrosine; by autocatalysis is present on residues Y653, Y654, Y730, and Y766. A compositionally biased stretch (polar residues) spans 778 to 792 (PSFPDTRSSTCSSGE). The disordered stretch occupies residues 778–822 (PSFPDTRSSTCSSGEDSVFSHEPLPEEPCLPRHPAQLANGGLKRR).

This sequence belongs to the protein kinase superfamily. Tyr protein kinase family. Fibroblast growth factor receptor subfamily. As to quaternary structure, monomer. Homodimer after ligand binding. Interacts predominantly with FGF1 and FGF2, but can also interact with FGF3, FGF4, FGF5, FGF6, FGF8, FGF10, FGF19, FGF21, FGF22 and FGF23 (in vitro). Ligand specificity is determined by tissue-specific expression of isoforms, and differences in the third Ig-like domain are crucial for ligand specificity. Affinity for fibroblast growth factors (FGFs) is increased by heparan sulfate glycosaminoglycans that function as coreceptors. Likewise, KLB increases the affinity for FGF19, FGF21 and FGF23. Interacts (phosphorylated on Tyr-766) with PLCG1 (via SH2 domains). Interacts with FRS2. Interacts with RPS6KA1. Interacts (via C-terminus) with NEDD4 (via WW3 domain). Interacts with KL. Interacts with SHB (via SH2 domain). Interacts with GRB10. Interacts with ANOS1; this interaction does not interfere with FGF2-binding to FGFR1, but prevents binding of heparin-bound FGF2. Interacts with SOX2 and SOX3. Interacts with FLRT1, FLRT2 and FLRT3. Found in a ternary complex with FGF1 and ITGAV:ITGB3. In terms of processing, autophosphorylated. Binding of FGF family members together with heparan sulfate proteoglycan or heparin promotes receptor dimerization and autophosphorylation on tyrosine residues. Autophosphorylation occurs in trans between the two FGFR molecules present in the dimer and proceeds in a highly ordered manner. Initial autophosphorylation at Tyr-653 increases the kinase activity by a factor of 50 to 100. After this, Tyr-583 becomes phosphorylated, followed by phosphorylation of Tyr-463, Tyr-766, Tyr-583 and Tyr-585. In a third stage, Tyr-654 is autophosphorylated, resulting in a further tenfold increase of kinase activity. Phosphotyrosine residues provide docking sites for interacting proteins and so are crucial for FGFR1 function and its regulation. Ubiquitinated. FGFR1 is rapidly ubiquitinated by NEDD4 after autophosphorylation, leading to internalization and lysosomal degradation. CBL is recruited to activated FGFR1 via FRS2 and GRB2, and mediates ubiquitination and subsequent degradation of FGFR1. Post-translationally, N-glycosylated in the endoplasmic reticulum. The N-glycan chains undergo further maturation to an Endo H-resistant form in the Golgi apparatus. As to expression, detected in astrocytoma, neuroblastoma and adrenal cortex cell lines. Some isoforms are detected in foreskin fibroblast cell lines, however isoform 17, isoform 18 and isoform 19 are not detected in these cells.

It is found in the cell membrane. It localises to the nucleus. The protein resides in the cytoplasm. The protein localises to the cytosol. Its subcellular location is the cytoplasmic vesicle. It catalyses the reaction L-tyrosyl-[protein] + ATP = O-phospho-L-tyrosyl-[protein] + ADP + H(+). Present in an inactive conformation in the absence of bound ligand. Ligand binding leads to dimerization and activation by sequential autophosphorylation on tyrosine residues. Inhibited by ARQ 069; this compound maintains the kinase in an inactive conformation and inhibits autophosphorylation. Inhibited by PD173074. Functionally, tyrosine-protein kinase that acts as a cell-surface receptor for fibroblast growth factors and plays an essential role in the regulation of embryonic development, cell proliferation, differentiation and migration. Required for normal mesoderm patterning and correct axial organization during embryonic development, normal skeletogenesis and normal development of the gonadotropin-releasing hormone (GnRH) neuronal system. Phosphorylates PLCG1, FRS2, GAB1 and SHB. Ligand binding leads to the activation of several signaling cascades. Activation of PLCG1 leads to the production of the cellular signaling molecules diacylglycerol and inositol 1,4,5-trisphosphate. Phosphorylation of FRS2 triggers recruitment of GRB2, GAB1, PIK3R1 and SOS1, and mediates activation of RAS, MAPK1/ERK2, MAPK3/ERK1 and the MAP kinase signaling pathway, as well as of the AKT1 signaling pathway. Promotes phosphorylation of SHC1, STAT1 and PTPN11/SHP2. In the nucleus, enhances RPS6KA1 and CREB1 activity and contributes to the regulation of transcription. FGFR1 signaling is down-regulated by IL17RD/SEF, and by FGFR1 ubiquitination, internalization and degradation. In Homo sapiens (Human), this protein is Fibroblast growth factor receptor 1 (FGFR1).